We begin with the raw amino-acid sequence, 226 residues long: Endonuclease V (226 aa).

The Mg(2+) site is built by Asp43 and Asp111.

This sequence belongs to the endonuclease V family. Mg(2+) serves as cofactor.

It localises to the cytoplasm. It carries out the reaction Endonucleolytic cleavage at apurinic or apyrimidinic sites to products with a 5'-phosphate.. Its function is as follows. DNA repair enzyme involved in the repair of deaminated bases. Selectively cleaves double-stranded DNA at the second phosphodiester bond 3' to a deoxyinosine leaving behind the intact lesion on the nicked DNA. In Nocardia farcinica (strain IFM 10152), this protein is Endonuclease V.